The chain runs to 359 residues: Cytoplasmic tRNA 2-thiolation protein 1 (359 aa).

This sequence belongs to the TtcA family. CTU1/NCS6/ATPBD3 subfamily. In terms of assembly, interacts with NCS2 and URM1. May act by forming a heterodimer with NCS2. Component of a large molecular weight complex of more than 250 kDa.

The protein localises to the cytoplasm. It localises to the mitochondrion. It participates in tRNA modification; 5-methoxycarbonylmethyl-2-thiouridine-tRNA biosynthesis. In terms of biological role, plays a central role in 2-thiolation of mcm(5)S(2)U at tRNA wobble positions of tRNA(Lys), tRNA(Glu) and tRNA(Gln). Directly binds tRNAs and probably acts by catalyzing adenylation of tRNAs, an intermediate required for 2-thiolation. It is unclear whether it acts as a sulfurtransferase that transfers sulfur from thiocarboxylated URM1 onto the uridine of tRNAs at wobble position. Prior mcm(5) tRNA modification by the elongator complex is required for 2-thiolation. May also be involved in protein urmylation. May also be involved in protein urmylation and in invasive and pseudohyphal growth. The chain is Cytoplasmic tRNA 2-thiolation protein 1 from Saccharomyces cerevisiae (strain ATCC 204508 / S288c) (Baker's yeast).